Reading from the N-terminus, the 318-residue chain is L-lactate dehydrogenase (318 aa).

Positions 14, 35, 40, and 66 each coordinate NAD(+). Residues R89 and 121–124 each bind substrate; that span reads NPVD. Residue S144 coordinates NAD(+). 149–152 serves as a coordination point for substrate; that stretch reads DTAR. Catalysis depends on H176, which acts as the Proton acceptor. A Phosphotyrosine modification is found at Y220. T229 is a binding site for substrate.

This sequence belongs to the LDH/MDH superfamily. LDH family. In terms of assembly, homotetramer.

The protein localises to the cytoplasm. It carries out the reaction (S)-lactate + NAD(+) = pyruvate + NADH + H(+). The protein operates within fermentation; pyruvate fermentation to lactate; (S)-lactate from pyruvate: step 1/1. Its function is as follows. Catalyzes the conversion of lactate to pyruvate. This Staphylococcus haemolyticus (strain JCSC1435) protein is L-lactate dehydrogenase.